We begin with the raw amino-acid sequence, 51 residues long: Large ribosomal subunit protein bL33 (51 aa).

This sequence belongs to the bacterial ribosomal protein bL33 family.

The sequence is that of Large ribosomal subunit protein bL33 from Nitrosospira multiformis (strain ATCC 25196 / NCIMB 11849 / C 71).